Consider the following 534-residue polypeptide: UDP-glucuronosyltransferase 2A3 (534 aa).

An N-terminal signal peptide occupies residues 1–18 (MVSEKCVAAFFLLQLCWA). The Extracellular segment spans residues 19 to 493 (GCGFCSKVLV…SWFQYHSLDV (475 aa)). Asn102 carries N-linked (GlcNAc...) asparagine glycosylation. Lys135 bears the N6-succinyllysine mark. N-linked (GlcNAc...) asparagine glycosylation is present at Asn204. The chain crosses the membrane as a helical span at residues 494–514 (IGFLLLCVVTLTFIITKFCLF). Topologically, residues 515–534 (VCQKLYMKESKKMGNRKKKN) are cytoplasmic.

It belongs to the UDP-glycosyltransferase family. In terms of tissue distribution, highly expressed in liver, with lower levels in duodenum and jejunum.

It is found in the membrane. It carries out the reaction glucuronate acceptor + UDP-alpha-D-glucuronate = acceptor beta-D-glucuronoside + UDP + H(+). Its function is as follows. UDP-glucuronosyltransferases catalyze phase II biotransformation reactions in which lipophilic substrates are conjugated with glucuronic acid to increase water solubility and enhance excretion. They are of major importance in the conjugation and subsequent elimination of potentially toxic xenobiotics and endogenous compounds. This Mus musculus (Mouse) protein is UDP-glucuronosyltransferase 2A3 (Ugt2a3).